The primary structure comprises 325 residues: Elongation factor P--(R)-beta-lysine ligase (325 aa).

Position 76–78 (76–78) interacts with substrate; it reads SPE. ATP is bound by residues 100-102 and asparagine 109; that span reads RNE. A substrate-binding site is contributed by tyrosine 118. Residue 244–245 participates in ATP binding; sequence EL. Glutamate 251 lines the substrate pocket. Glycine 300 contributes to the ATP binding site.

The protein belongs to the class-II aminoacyl-tRNA synthetase family. EpmA subfamily. In terms of assembly, homodimer.

It catalyses the reaction D-beta-lysine + L-lysyl-[protein] + ATP = N(6)-((3R)-3,6-diaminohexanoyl)-L-lysyl-[protein] + AMP + diphosphate + H(+). In terms of biological role, with EpmB is involved in the beta-lysylation step of the post-translational modification of translation elongation factor P (EF-P). Catalyzes the ATP-dependent activation of (R)-beta-lysine produced by EpmB, forming a lysyl-adenylate, from which the beta-lysyl moiety is then transferred to the epsilon-amino group of a conserved specific lysine residue in EF-P. In Edwardsiella ictaluri (strain 93-146), this protein is Elongation factor P--(R)-beta-lysine ligase.